The following is a 128-amino-acid chain: Glycine cleavage system H protein (128 aa).

In terms of domain architecture, Lipoyl-binding spans 22–104; that stretch reads AIVVGITDFA…YEEGWMITIE (83 aa). Lysine 63 bears the N6-lipoyllysine mark.

Belongs to the GcvH family. In terms of assembly, the glycine cleavage system is composed of four proteins: P, T, L and H. It depends on (R)-lipoate as a cofactor.

In terms of biological role, the glycine cleavage system catalyzes the degradation of glycine. The H protein shuttles the methylamine group of glycine from the P protein to the T protein. The sequence is that of Glycine cleavage system H protein from Anaeromyxobacter dehalogenans (strain 2CP-1 / ATCC BAA-258).